The chain runs to 422 residues: Mannose-1-phosphate guanylyltransferase regulatory subunit alpha-A (422 aa).

Residues 2 to 253 (LKAVILIGGP…DRFWSQIKSA (252 aa)) are substrate-binding domain. 2 residues coordinate GDP-alpha-D-mannose: Glu85 and Gln249. Residues 275-422 (LATNTEGGAK…NRSFKNQIIL (148 aa)) form a hexapeptide repeat domain region. The segment at 358 to 386 (TPSDPNPNDPYAKIDSETLFRDGKLTPSI) is C-loop.

It belongs to the transferase hexapeptide repeat family. In terms of assembly, component of the GMPPA-GMPPB mannose-1-phosphate guanylyltransferase complex composed of 4 gmppa subunits and 8 gmppb subunits; the complex is organized into three layers, a central layer made up of 2 gmppa dimers sandwiched between two layers each made up of 2 gmppb dimers.

It participates in nucleotide-sugar biosynthesis; GDP-alpha-D-mannose biosynthesis; GDP-alpha-D-mannose from alpha-D-mannose 1-phosphate (GTP route): step 1/1. Its function is as follows. Regulatory subunit of the GMPPA-GMPPB mannose-1-phosphate guanylyltransferase complex; reduces the catalytic activity of GMPPB when part of the complex. Mediates allosteric feedback inhibition of GMPPB catalytic activity upon binding GDP-alpha-D-mannose. Together with GMPPB regulates GDP-alpha-D-mannose levels. One of two paralogs (gmppaa and gmppab) that may have redundant functions. The polypeptide is Mannose-1-phosphate guanylyltransferase regulatory subunit alpha-A (gmppaa) (Danio rerio (Zebrafish)).